The sequence spans 409 residues: Peptidase T (409 aa).

His80 is a Zn(2+) binding site. Asp82 is an active-site residue. Asp143 is a Zn(2+) binding site. Glu177 serves as the catalytic Proton acceptor. Residues Glu178, Asp200, and His382 each coordinate Zn(2+).

Belongs to the peptidase M20B family. Requires Zn(2+) as cofactor.

It localises to the cytoplasm. The enzyme catalyses Release of the N-terminal residue from a tripeptide.. Its function is as follows. Cleaves the N-terminal amino acid of tripeptides. The sequence is that of Peptidase T from Alkaliphilus oremlandii (strain OhILAs) (Clostridium oremlandii (strain OhILAs)).